We begin with the raw amino-acid sequence, 233 residues long: Adenylyl cyclase-associated protein 1 (233 aa).

Tyr-14 carries the phosphotyrosine modification. Ser-17 is modified (phosphoserine). 2 disordered regions span residues Val-43 to Leu-71 and Asp-91 to Thr-129. A compositionally biased stretch (low complexity) spans Leu-53 to Ser-64. Lys-101 carries the post-translational modification N6-methyllysine. 4 positions are modified to phosphoserine: Ser-104, Ser-115, Ser-122, and Ser-124. Lys-151 participates in a covalent cross-link: Glycyl lysine isopeptide (Lys-Gly) (interchain with G-Cter in SUMO1). The 49-residue stretch at Val-173–Val-221 folds into the C-CAP/cofactor C-like domain.

Belongs to the CAP family. As to quaternary structure, homodimer. Binds actin monomers.

It is found in the cell membrane. Functionally, directly regulates filament dynamics and has been implicated in a number of complex developmental and morphological processes, including mRNA localization and the establishment of cell polarity. The polypeptide is Adenylyl cyclase-associated protein 1 (CAP1) (Sus scrofa (Pig)).